The chain runs to 269 residues: Ribosomal RNA small subunit methyltransferase A (269 aa).

The S-adenosyl-L-methionine site is built by N20, L22, G47, E68, D90, and N110.

It belongs to the class I-like SAM-binding methyltransferase superfamily. rRNA adenine N(6)-methyltransferase family. RsmA subfamily.

It localises to the cytoplasm. It carries out the reaction adenosine(1518)/adenosine(1519) in 16S rRNA + 4 S-adenosyl-L-methionine = N(6)-dimethyladenosine(1518)/N(6)-dimethyladenosine(1519) in 16S rRNA + 4 S-adenosyl-L-homocysteine + 4 H(+). Functionally, specifically dimethylates two adjacent adenosines (A1518 and A1519) in the loop of a conserved hairpin near the 3'-end of 16S rRNA in the 30S particle. May play a critical role in biogenesis of 30S subunits. This chain is Ribosomal RNA small subunit methyltransferase A, found in Chlorobium phaeobacteroides (strain DSM 266 / SMG 266 / 2430).